The primary structure comprises 560 residues: Nibrin homolog (560 aa).

Positions 25 to 87 (YKVGRKDCDV…YGTFFNKVQG (63 aa)) constitute an FHA domain. In terms of domain architecture, BRCT spans 115-190 (TFRLSFVPIV…KQIVLGDWFK (76 aa)).

The protein belongs to the Nibrin family. In terms of assembly, component of the MRN complex composed of two heterodimers RAD50 and MRE11 associated with a single NBS1. As to expression, mostly expressed in the shoot apex and young flower, but also in young leaves, root tips and stamen, tissues where frequent cell division or meiosis may occur.

The protein resides in the nucleus. It is found in the chromosome. In terms of biological role, component of the MRN complex, which plays a central role in double-strand break (DSB) repair, DNA recombination, maintenance of telomere integrity and meiosis. The MRN complex is involved in the repair of DNA double-strand breaks (DSBs) via homologous recombination (HR), an error-free mechanism which primarily occurs during S and G2 phases. The complex (1) mediates the end resection of damaged DNA, which generates proper single-stranded DNA, a key initial steps in HR, and is (2) required for the recruitment of other repair factors and efficient activation of ATM and ATR upon DNA damage. The MRN complex possesses single-strand endonuclease activity and double-strand-specific 3'-5' exonuclease activity, which are provided by MRE11, to initiate end resection, which is required for single-strand invasion and recombination. Within the MRN complex, NBS1 acts as a protein-protein adapter, which specifically recognizes and binds phosphorylated proteins, promoting their recruitment to DNA damage sites. Recruits MRE11 and RAD50 components of the MRN complex to DSBs in response to DNA damage. The sequence is that of Nibrin homolog from Oryza sativa subsp. japonica (Rice).